A 2021-amino-acid polypeptide reads, in one-letter code: Fanconi anemia group M protein homolog (2021 aa).

S30 bears the Phosphoserine mark. One can recognise a Helicase ATP-binding domain in the interval 86–254 (ISRSALFCNT…QVITNLLIGK (169 aa)). 99-106 (LPTGLGKT) is an ATP binding site. The DEAH box motif lies at 202–205 (DEAH). Residues 437–612 (KLEEVILEHF…VLRLYQGSPR (176 aa)) form the Helicase C-terminal domain. Disordered regions lie at residues 638–657 (RSVQRRPFSSRGGIKASKSN), 837–886 (PCRA…RMAD), 1002–1049 (CSPY…LPGT), 1244–1273 (GAADVSGRHSDKEIKDAGGASGPLGRAISP), 1296–1319 (ASSSPVKQRVRSTPLSKSHASSKT), 1369–1441 (PRRT…RTCP), 1447–1466 (KGRNRNIRKGSAAQKNRSQV), 1615–1700 (NKKQ…QPSI), and 1712–1732 (AQSHNKIKSASPPCTGVESRK). The span at 1018–1035 (ASHSAGNSQQNLESNSAK) shows a compositional bias: polar residues. Basic and acidic residues predominate over residues 1249-1259 (SGRHSDKEIKD). Basic and acidic residues predominate over residues 1370–1379 (RRTEVEHLTS). The span at 1388-1397 (RKTKKPKRNV) shows a compositional bias: basic residues. At S1637 the chain carries Phosphoserine. The segment covering 1669-1682 (SGPSGSSVPPQVLS) has biased composition (low complexity). A compositionally biased stretch (polar residues) spans 1684–1700 (PSWNQSSRQRLQVQPSI). The interaction with FAAP24 stretch occupies residues 1689–2009 (SSRQRLQVQP…LNQERQKPDT (321 aa)).

This sequence belongs to the DEAD box helicase family. DEAH subfamily. FANCM sub-subfamily. As to quaternary structure, component of the Fanconi anemia (FA) core complex, which consists of CENPS, CENPX, FANCA, FANCB, FANCC, FANCE, FANCF, FANCG, FANCL, FANCM, FAAP24 and FAAP100. The FA core complex associates with Bloom syndrome (BLM) complex, which consists of at least BLM, DNA topoisomerase 3-alpha/TOP3A, RMI1/BLAP75, RPA1/RPA70 and RPA2/RPA32. This supercomplex between FA and BLM complexes has been called BRAFT. Forms a discrete complex with CENPS and CENPX, called FANCM-MHF; this interaction stimulates DNA binding and replication fork remodeling by FANCM and stabilizes the binding partners. Forms a heterodimer with FAAP24; this interaction increases FANCM single-stranded DNA-binding activity. Post-translationally, phosphorylated; hyperphosphorylated in response to genotoxic stress.

It is found in the nucleus. The enzyme catalyses ATP + H2O = ADP + phosphate + H(+). Functionally, DNA-dependent ATPase component of the Fanconi anemia (FA) core complex. Required for the normal activation of the FA pathway, leading to monoubiquitination of the FANCI-FANCD2 complex in response to DNA damage, cellular resistance to DNA cross-linking drugs, and prevention of chromosomal breakage. In complex with CENPS and CENPX, binds double-stranded DNA (dsDNA), fork-structured DNA (fsDNA) and Holliday junction substrates. Its ATP-dependent DNA branch migration activity can process branched DNA structures such as a movable replication fork. This activity is strongly stimulated in the presence of CENPS and CENPX. In complex with FAAP24, efficiently binds to single-strand DNA (ssDNA), splayed-arm DNA, and 3'-flap substrates. In vitro, on its own, strongly binds ssDNA oligomers and weakly fsDNA, but does not bind to dsDNA. This chain is Fanconi anemia group M protein homolog (Fancm), found in Mus musculus (Mouse).